Here is a 214-residue protein sequence, read N- to C-terminus: Large ribosomal subunit protein bL25 (214 aa).

Residues 179–214 (VPPTQGPSEAEIEEVEAGDADTPEPEVVGEKEEDEE) are disordered. Positions 188–202 (AEIEEVEAGDADTPE) are enriched in acidic residues.

This sequence belongs to the bacterial ribosomal protein bL25 family. CTC subfamily. In terms of assembly, part of the 50S ribosomal subunit; part of the 5S rRNA/L5/L18/L25 subcomplex. Contacts the 5S rRNA. Binds to the 5S rRNA independently of L5 and L18.

Functionally, this is one of the proteins that binds to the 5S RNA in the ribosome where it forms part of the central protuberance. The sequence is that of Large ribosomal subunit protein bL25 from Staphylococcus carnosus (strain TM300).